The chain runs to 628 residues: Probable alpha-L-arabinofuranosidase A (628 aa).

The first 25 residues, 1–25 (MVAFSALSGVSAVSLLLSLVQNAHG), serve as a signal peptide directing secretion. Asn-36, Asn-51, Asn-74, Asn-152, Asn-171, Asn-260, Asn-359, Asn-440, Asn-493, and Asn-610 each carry an N-linked (GlcNAc...) asparagine glycan.

This sequence belongs to the glycosyl hydrolase 51 family.

The protein localises to the secreted. It carries out the reaction Hydrolysis of terminal non-reducing alpha-L-arabinofuranoside residues in alpha-L-arabinosides.. Its pathway is glycan metabolism; L-arabinan degradation. Functionally, alpha-L-arabinofuranosidase involved in the degradation of arabinoxylan, a major component of plant hemicellulose. Acts only on small linear 1,5-alpha-linked L-arabinofuranosyl oligosaccharides. This is Probable alpha-L-arabinofuranosidase A (abfA) from Aspergillus niger (strain ATCC MYA-4892 / CBS 513.88 / FGSC A1513).